Consider the following 162-residue polypeptide: Protein-export protein SecB (162 aa).

The protein belongs to the SecB family. As to quaternary structure, homotetramer, a dimer of dimers. One homotetramer interacts with 1 SecA dimer.

It localises to the cytoplasm. One of the proteins required for the normal export of preproteins out of the cell cytoplasm. It is a molecular chaperone that binds to a subset of precursor proteins, maintaining them in a translocation-competent state. It also specifically binds to its receptor SecA. The protein is Protein-export protein SecB of Pseudoalteromonas translucida (strain TAC 125).